Consider the following 351-residue polypeptide: UDP-N-acetylenolpyruvoylglucosamine reductase (351 aa).

The FAD-binding PCMH-type domain maps to 11–213 (GVGGSIACFI…KQVRDQVLRI (203 aa)). Residue Arg-158 is part of the active site. Ser-239 serves as the catalytic Proton donor. The active site involves Glu-343.

Belongs to the MurB family. Requires FAD as cofactor.

The protein localises to the cytoplasm. The catalysed reaction is UDP-N-acetyl-alpha-D-muramate + NADP(+) = UDP-N-acetyl-3-O-(1-carboxyvinyl)-alpha-D-glucosamine + NADPH + H(+). The protein operates within cell wall biogenesis; peptidoglycan biosynthesis. Its function is as follows. Cell wall formation. The sequence is that of UDP-N-acetylenolpyruvoylglucosamine reductase from Tropheryma whipplei (strain TW08/27) (Whipple's bacillus).